The chain runs to 161 residues: 3-hydroxyacyl-[acyl-carrier-protein] dehydratase FabZ (161 aa).

His-66 is an active-site residue.

The protein belongs to the thioester dehydratase family. FabZ subfamily.

It is found in the cytoplasm. It catalyses the reaction a (3R)-hydroxyacyl-[ACP] = a (2E)-enoyl-[ACP] + H2O. In terms of biological role, involved in unsaturated fatty acids biosynthesis. Catalyzes the dehydration of short chain beta-hydroxyacyl-ACPs and long chain saturated and unsaturated beta-hydroxyacyl-ACPs. The polypeptide is 3-hydroxyacyl-[acyl-carrier-protein] dehydratase FabZ (Gluconacetobacter diazotrophicus (strain ATCC 49037 / DSM 5601 / CCUG 37298 / CIP 103539 / LMG 7603 / PAl5)).